The chain runs to 488 residues: Glutamyl-tRNA(Gln) amidotransferase subunit A (488 aa).

Catalysis depends on charge relay system residues Lys77 and Ser152. Ser176 functions as the Acyl-ester intermediate in the catalytic mechanism.

This sequence belongs to the amidase family. GatA subfamily. As to quaternary structure, heterotrimer of A, B and C subunits.

It catalyses the reaction L-glutamyl-tRNA(Gln) + L-glutamine + ATP + H2O = L-glutaminyl-tRNA(Gln) + L-glutamate + ADP + phosphate + H(+). In terms of biological role, allows the formation of correctly charged Gln-tRNA(Gln) through the transamidation of misacylated Glu-tRNA(Gln) in organisms which lack glutaminyl-tRNA synthetase. The reaction takes place in the presence of glutamine and ATP through an activated gamma-phospho-Glu-tRNA(Gln). The chain is Glutamyl-tRNA(Gln) amidotransferase subunit A from Streptococcus thermophilus (strain CNRZ 1066).